The primary structure comprises 2256 residues: GON-4-like protein (2256 aa).

Disordered stretches follow at residues 1-56 (MLPC…DSAG), 105-213 (PSLE…SLGP), and 227-266 (LFIP…MTYD). A compositionally biased stretch (basic and acidic residues) spans 23–35 (EDLHLEAAVKPDT). Over residues 40–53 (DCTSESLSWGQSHD) the composition is skewed to polar residues. Positions 141–176 (TREDGGDHTVPEEPPSGEHAEEVKAEGGELEMHSEG) are enriched in basic and acidic residues. The span at 242-254 (RKKTKKGTKRKRD) shows a compositional bias: basic residues. Phosphoserine is present on S346. Acidic residues predominate over residues 366 to 395 (EDDDSSDEEYQPDEEEEDETAEESLLESDV). 3 disordered regions span residues 366 to 428 (EDDD…VLSE), 441 to 460 (SAEV…QTRD), and 545 to 573 (DVEN…DTED). Over residues 545 to 571 (DVENEDEADDDDDPEYNFLEDLDEPDT) the composition is skewed to acidic residues. The interval 609 to 1363 (EMGFSNMEDD…DCMEEISSDF (755 aa)) is required for interaction with YY1, SIN3A and HDAC1, and transcriptional repression activity. S783 bears the Phosphoserine mark. 2 stretches are compositionally biased toward low complexity: residues 947 to 959 (TAGG…TETS) and 1094 to 1115 (PWSE…LPSL). Disordered stretches follow at residues 947-969 (TAGG…KTSP), 1078-1141 (AALP…SPCV), 1241-1288 (AEGK…EAVS), and 1360-1620 (SSDF…SRAR). Residues 1119 to 1135 (KFRKPYVRRKPTRRKGA) show a composition bias toward basic residues. Positions 1364 to 1386 (PKQDIGEEVKEECCMELDRDSPQ) are enriched in basic and acidic residues. Composition is skewed to polar residues over residues 1387–1401 (EKAS…QTAT) and 1429–1444 (LPQS…TVLN). Residue S1445 is modified to Phosphoserine. The segment covering 1475 to 1495 (GAEEEEEEDFDDLTQDEEDEL) has biased composition (acidic residues). Residues 1496-1510 (SSASEESVLSVPELQ) are compositionally biased toward low complexity. The segment covering 1529–1553 (GESEEENSQEENSEPEEEEEEEAEG) has biased composition (acidic residues). Basic residues predominate over residues 1606-1620 (RSSHRARSRRGSRAR). PAH domains are found at residues 1644-1716 (EQKD…LLPE) and 1726-1797 (EQQA…FDHL). 2 disordered regions span residues 1831-1886 (VEEE…LKKS) and 1909-1966 (LELV…APIP). Basic and acidic residues predominate over residues 1851–1868 (EIGVQHQDKESEWPEAAK). Phosphoserine is present on residues S1921 and S1994. Disordered stretches follow at residues 2050 to 2078 (PETS…STRD) and 2110 to 2148 (IRGT…VLPK). The span at 2111–2129 (RGTSSGASASEAAPTASRE) shows a compositional bias: low complexity. A Myb-like domain is found at 2163–2216 (STGEKVVLWTREADRVILTMCQEQGAQPHTFSVISQQLGNKTPVEVSHRFRELM). The segment at 2223–2256 (CEASSEDEDDATSTSNADQLSDHGDLLSEEELDE) is disordered.

As to quaternary structure, found in a complex with YY1, SIN3A and HDAC1.

It is found in the nucleus. Functionally, has transcriptional repressor activity, probably as part of a complex with YY1, SIN3A and HDAC1. Required for B cell lymphopoiesis. The protein is GON-4-like protein (Gon4l) of Rattus norvegicus (Rat).